Here is a 239-residue protein sequence, read N- to C-terminus: Orotidine 5'-phosphate decarboxylase (239 aa).

Substrate is bound by residues Asp11, Lys33, 60-69 (DLKLHDIPTT), Thr123, Arg185, Gln194, Gly214, and Arg215. Lys62 functions as the Proton donor in the catalytic mechanism.

The protein belongs to the OMP decarboxylase family. Type 1 subfamily. Homodimer.

The catalysed reaction is orotidine 5'-phosphate + H(+) = UMP + CO2. Its pathway is pyrimidine metabolism; UMP biosynthesis via de novo pathway; UMP from orotate: step 2/2. In terms of biological role, catalyzes the decarboxylation of orotidine 5'-monophosphate (OMP) to uridine 5'-monophosphate (UMP). The sequence is that of Orotidine 5'-phosphate decarboxylase (pyrF) from Bacillus subtilis (strain 168).